We begin with the raw amino-acid sequence, 273 residues long: 2,3,4,5-tetrahydropyridine-2,6-dicarboxylate N-succinyltransferase (273 aa).

2 residues coordinate substrate: Arg105 and Asp142.

The protein belongs to the transferase hexapeptide repeat family. In terms of assembly, homotrimer.

The protein localises to the cytoplasm. The catalysed reaction is (S)-2,3,4,5-tetrahydrodipicolinate + succinyl-CoA + H2O = (S)-2-succinylamino-6-oxoheptanedioate + CoA. It functions in the pathway amino-acid biosynthesis; L-lysine biosynthesis via DAP pathway; LL-2,6-diaminopimelate from (S)-tetrahydrodipicolinate (succinylase route): step 1/3. This is 2,3,4,5-tetrahydropyridine-2,6-dicarboxylate N-succinyltransferase from Bordetella avium (strain 197N).